The chain runs to 31 residues: Conotoxin (31 aa).

Belongs to the conotoxin S superfamily. In terms of processing, contains 5 disulfide bonds. Expressed by the venom duct.

The protein localises to the secreted. This chain is Conotoxin, found in Conus striatus (Striated cone).